Reading from the N-terminus, the 784-residue chain is Toll-like receptor 2 (784 aa).

Positions 1 to 20 are cleaved as a signal peptide; sequence MPHTLWMVWVLGVIISLSKE. The Extracellular segment spans residues 21–587; sequence ESSNQASLSC…VRLSVSECHR (567 aa). Residues Cys30 and Cys36 are joined by a disulfide bond. 19 LRR repeats span residues 54–77, 78–101, 102–125, 126–150, 151–175, 176–199, 200–223, 224–250, 251–278, 279–308, 309–337, 338–361, 362–388, 389–414, 415–437, 438–457, 458–478, 479–500, and 501–524; these read VKSLDLSNNRITYISNSDLQRCVN, LQALVLTSNGINTIEEDSFSSLGS, LEHLDLSYNYLSNLSSSWFKPLSS, LTFLNLLGNPYKTLGETSLFSHLTK, LQILRVGNMDTFTKIQRKDFAGLTF, LEELEIDASDLQSYEPKSLKSIQN, VSHLILHMKQHILLLEIFVDVTSS, VECLELRDTDLDTFRFSELSTGETNSL, IKKFTFRNVKITDESLFQVMKLLNQISG, LLELEFDDCTLNGVGNFRASDNDRVIDPGK, VETLTIRRLHIPRFYLFYDLSTLYSLTER, VKRITVENSKVFLVPCLLSQHLKS, LEYLDLSENLIVEEYLKNSACEDAWPS, LQTLILRQNHLASLEKTGETLLTLKN, LTNVDISKNSFHSMPETCQWPEK, MKYLNLSSTRIHSVTGCIPK, TLEILDVSNNNLNLFSLNLPQ, LKELYISRNKLMTLPDASLLPM, and LLVLKISRNAITTFSKEQLDSFHT. N-linked (GlcNAc...) asparagine glycosylation is present at Asn114. The N-linked (GlcNAc...) asparagine glycan is linked to Asn199. A disulfide bridge links Cys353 with Cys382. An N-linked (GlcNAc...) asparagine glycan is attached at Asn414. A disulfide bridge connects residues Cys432 and Cys454. Asn442 is a glycosylation site (N-linked (GlcNAc...) asparagine). The 55-residue stretch at 525–579 folds into the LRRCT domain; it reads LKTLEAGGNNFICSCEFLSFTQEQQALAKVLIDWPANYLCDSPSHVRGQQVQDVR. The chain crosses the membrane as a helical span at residues 588–608; the sequence is TALVSGMCCALFLLILLTGVL. Residues 609–784 lie on the Cytoplasmic side of the membrane; the sequence is CHRFHGLWYM…WVNLRAAIKS (176 aa). One can recognise a TIR domain in the interval 639–782; sequence ICYDAFVSYS…GFWVNLRAAI (144 aa). A Glycyl lysine isopeptide (Lys-Gly) (interchain with G-Cter in ubiquitin) cross-link involves residue Lys754. Residues 761–778 carry the ATG16L1-binding motif motif; it reads YLEWPMDEAQREGFWVNL.

Belongs to the Toll-like receptor family. Interacts with LY96, TLR1 and TLR6 (via extracellular domain). TLR2 seems to exist in heterodimers with either TLR1 or TLR6 before stimulation by the ligand. The heterodimers form bigger oligomers in response to their corresponding ligands as well as further heterotypic associations with other receptors such as CD14 and/or CD36. Binds MYD88 (via TIR domain). Interacts with TICAM1. Interacts with CNPY3. Interacts with ATG16L1. Interacts with PPP1R11. Interacts with TICAM2. Interacts with TIRAP. Post-translationally, ubiquitinated at Lys-754 by PPP1R11, leading to its degradation. Deubiquitinated by USP2. In terms of processing, glycosylation of Asn-442 is critical for secretion of the N-terminal ectodomain of TLR2.

Its subcellular location is the membrane. The protein resides in the cytoplasmic vesicle. It localises to the phagosome membrane. The protein localises to the membrane raft. Functionally, cooperates with LY96 to mediate the innate immune response to bacterial lipoproteins and other microbial cell wall components. Cooperates with TLR1 or TLR6 to mediate the innate immune response to bacterial lipoproteins or lipopeptides. Acts via MYD88 and TRAF6, leading to NF-kappa-B activation, cytokine secretion and the inflammatory response. May also promote apoptosis in response to lipoproteins. Forms activation clusters composed of several receptors depending on the ligand, these clusters trigger signaling from the cell surface and subsequently are targeted to the Golgi in a lipid-raft dependent pathway. Forms the cluster TLR2:TLR6:CD14:CD36 in response to diacylated lipopeptides and TLR2:TLR1:CD14 in response to triacylated lipopeptides. This Pan troglodytes (Chimpanzee) protein is Toll-like receptor 2 (TLR2).